Here is a 122-residue protein sequence, read N- to C-terminus: Small ribosomal subunit protein uS13 (122 aa).

The tract at residues 94-122 (KKLPVRGQRTHTNARTRKGPAKPIAGKKK) is disordered.

This sequence belongs to the universal ribosomal protein uS13 family. Part of the 30S ribosomal subunit. Forms a loose heterodimer with protein S19. Forms two bridges to the 50S subunit in the 70S ribosome.

Functionally, located at the top of the head of the 30S subunit, it contacts several helices of the 16S rRNA. In the 70S ribosome it contacts the 23S rRNA (bridge B1a) and protein L5 of the 50S subunit (bridge B1b), connecting the 2 subunits; these bridges are implicated in subunit movement. Contacts the tRNAs in the A and P-sites. In Hyphomonas neptunium (strain ATCC 15444), this protein is Small ribosomal subunit protein uS13.